The sequence spans 83 residues: uncharacterized protein (83 aa).

The protein belongs to the UPF0440 family.

This is an uncharacterized protein from Natronomonas pharaonis (strain ATCC 35678 / DSM 2160 / CIP 103997 / JCM 8858 / NBRC 14720 / NCIMB 2260 / Gabara) (Halobacterium pharaonis).